We begin with the raw amino-acid sequence, 431 residues long: Glutamate-1-semialdehyde 2,1-aminomutase 2 (431 aa).

Lys268 is modified (N6-(pyridoxal phosphate)lysine).

It belongs to the class-III pyridoxal-phosphate-dependent aminotransferase family. HemL subfamily. In terms of assembly, homodimer. The cofactor is pyridoxal 5'-phosphate.

The protein localises to the cytoplasm. It catalyses the reaction (S)-4-amino-5-oxopentanoate = 5-aminolevulinate. It functions in the pathway porphyrin-containing compound metabolism; protoporphyrin-IX biosynthesis; 5-aminolevulinate from L-glutamyl-tRNA(Glu): step 2/2. In Anoxybacillus flavithermus (strain DSM 21510 / WK1), this protein is Glutamate-1-semialdehyde 2,1-aminomutase 2.